A 165-amino-acid chain; its full sequence is Crossover junction endodeoxyribonuclease RuvC (165 aa).

Active-site residues include Asp7, Glu68, and His142. Positions 7, 68, and 142 each coordinate Mg(2+).

The protein belongs to the RuvC family. As to quaternary structure, homodimer which binds Holliday junction (HJ) DNA. The HJ becomes 2-fold symmetrical on binding to RuvC with unstacked arms; it has a different conformation from HJ DNA in complex with RuvA. In the full resolvosome a probable DNA-RuvA(4)-RuvB(12)-RuvC(2) complex forms which resolves the HJ. Mg(2+) is required as a cofactor.

The protein localises to the cytoplasm. It carries out the reaction Endonucleolytic cleavage at a junction such as a reciprocal single-stranded crossover between two homologous DNA duplexes (Holliday junction).. Its function is as follows. The RuvA-RuvB-RuvC complex processes Holliday junction (HJ) DNA during genetic recombination and DNA repair. Endonuclease that resolves HJ intermediates. Cleaves cruciform DNA by making single-stranded nicks across the HJ at symmetrical positions within the homologous arms, yielding a 5'-phosphate and a 3'-hydroxyl group; requires a central core of homology in the junction. The consensus cleavage sequence is 5'-(A/T)TT(C/G)-3'. Cleavage occurs on the 3'-side of the TT dinucleotide at the point of strand exchange. HJ branch migration catalyzed by RuvA-RuvB allows RuvC to scan DNA until it finds its consensus sequence, where it cleaves and resolves the cruciform DNA. This Anaplasma marginale (strain Florida) protein is Crossover junction endodeoxyribonuclease RuvC.